Reading from the N-terminus, the 142-residue chain is Transcriptional regulator MraZ (142 aa).

2 consecutive SpoVT-AbrB domains span residues 5–47 and 76–119; these read EYNH…PMEE and ANEI…SREK.

The protein belongs to the MraZ family. As to quaternary structure, forms oligomers.

The protein localises to the cytoplasm. It localises to the nucleoid. The chain is Transcriptional regulator MraZ from Clostridium tetani (strain Massachusetts / E88).